The following is a 1110-amino-acid chain: Nitric oxide synthase 3 (1110 aa).

Positions 1–74 (MGNFKSVGQE…PPEGPKFPRV (74 aa)) are disordered. The segment covering 15–27 (CGLGLGLGLGLCG) has biased composition (gly residues). Low complexity predominate over residues 31-40 (PASPAPVSAS). Positions 47–69 (SSPPLPLPAPEHSPPLTRPPEGP) are enriched in pro residues. Residues cysteine 97 and cysteine 102 each contribute to the Zn(2+) site. Positions 101 to 489 (RCLGSLVFPR…PDPWKGSGTK (389 aa)) are interaction with NOSIP. Serine 105 provides a ligand contact to (6R)-L-erythro-5,6,7,8-tetrahydrobiopterin. Serine 117 carries the post-translational modification Phosphoserine. Position 187 (cysteine 187) interacts with heme b. L-arginine is bound by residues glutamine 250, tryptophan 359, tyrosine 360, and glutamate 364. Arginine 368 contacts (6R)-L-erythro-5,6,7,8-tetrahydrobiopterin. Position 369 (asparagine 369) interacts with L-arginine. The (6R)-L-erythro-5,6,7,8-tetrahydrobiopterin site is built by alanine 449, tryptophan 450, and phenylalanine 463. Residue tyrosine 478 coordinates heme b. Residue threonine 498 is modified to Phosphothreonine. FMN contacts are provided by serine 529, glutamate 530, threonine 531, arginine 533, serine 575, and threonine 576. Serine 618, serine 636, and serine 641 each carry phosphoserine. Residues serine 657, cysteine 664, glutamate 690, and glutamine 694 each coordinate FMN. An NADP(+)-binding site is contributed by arginine 779. Histidine 801 contacts FAD. Residues 821–848 (EDPPPPAESVAVEQLEKGSPGGPPPGWV) form a disordered region. Phosphoserine is present on serine 839. Residues arginine 941, tyrosine 943, serine 944, threonine 959, alanine 961, tyrosine 965, valine 978, cysteine 979, and serine 980 each contribute to the FAD site. NADP(+) contacts are provided by threonine 1019, arginine 1052, serine 1081, arginine 1082, and lysine 1088.

Belongs to the NOS family. Homodimer. Interacts with NOSIP and NOSTRIN. Interacts with HSP90AB1. Forms a complex with ASL, ASS1 and SLC7A1; the complex regulates cell-autonomous L-arginine synthesis and citrulline recycling while channeling extracellular L-arginine to nitric oxide synthesis pathway. Heme b serves as cofactor. Requires FAD as cofactor. It depends on FMN as a cofactor. (6R)-L-erythro-5,6,7,8-tetrahydrobiopterin is required as a cofactor.

The protein resides in the membrane. It is found in the caveola. It localises to the cytoplasm. The protein localises to the cytoskeleton. Its subcellular location is the golgi apparatus. The protein resides in the cell membrane. The catalysed reaction is 2 L-arginine + 3 NADPH + 4 O2 + H(+) = 2 L-citrulline + 2 nitric oxide + 3 NADP(+) + 4 H2O. Stimulated by calcium/calmodulin. Inhibited by NOSIP and NOSTRIN. Produces nitric oxide (NO) which is implicated in vascular smooth muscle relaxation through a cGMP-mediated signal transduction pathway. NO mediates vascular endothelial growth factor (VEGF)-induced angiogenesis in coronary vessels and promotes blood clotting through the activation of platelets. The polypeptide is Nitric oxide synthase 3 (NOS3) (Cavia porcellus (Guinea pig)).